The following is a 683-amino-acid chain: Actin-binding LIM protein 3 (683 aa).

Met1 carries the post-translational modification N-acetylmethionine. 4 LIM zinc-binding domains span residues 21-80 (IQCY…LYGT), 80-140 (TRCD…MASS), 149-208 (SHCA…QFGI), and 208-268 (IKCE…ARAE). A phosphoserine mark is found at Ser277, Ser280, Ser282, Ser286, Ser290, Ser337, Ser372, and Ser373. The segment at 372 to 472 (SSPGYIDSPT…EDISQTSKYS (101 aa)) is disordered. The residue at position 376 (Tyr376) is a Phosphotyrosine. 2 positions are modified to phosphoserine: Ser379 and Ser388. Composition is skewed to polar residues over residues 380–393 (PTYS…TFSR), 406–426 (GRSS…TSYQ), and 454–471 (STAT…TSKY). Residues Ser493, Ser503, and Ser504 each carry the phosphoserine modification. Residue Thr543 is modified to Phosphothreonine. Phosphoserine is present on residues Ser567, Ser576, and Ser607. One can recognise an HP domain in the interval 615-683 (MREYKIYPYE…NELKKQARLF (69 aa)). Arg631 is modified (omega-N-methylarginine).

In terms of assembly, directly interacts with F-actin and ABRA. In terms of tissue distribution, expressed predominantly in heart and brain.

The protein localises to the cytoplasm. Its function is as follows. May act as scaffold protein. May stimulate ABRA activity and ABRA-dependent SRF transcriptional activity. This Homo sapiens (Human) protein is Actin-binding LIM protein 3 (ABLIM3).